Consider the following 283-residue polypeptide: Formamidopyrimidine-DNA glycosylase (283 aa).

Catalysis depends on Pro-2, which acts as the Schiff-base intermediate with DNA. Glu-3 acts as the Proton donor in catalysis. Lys-58 (proton donor; for beta-elimination activity) is an active-site residue. DNA contacts are provided by His-100, Arg-119, and Arg-162. The segment at 247–283 (RVYGREGLPCVTPGCSGTVGRIVQSGRSSFHCPLCQR) adopts an FPG-type zinc-finger fold. Arg-273 acts as the Proton donor; for delta-elimination activity in catalysis.

This sequence belongs to the FPG family. Monomer. Requires Zn(2+) as cofactor.

The catalysed reaction is Hydrolysis of DNA containing ring-opened 7-methylguanine residues, releasing 2,6-diamino-4-hydroxy-5-(N-methyl)formamidopyrimidine.. It catalyses the reaction 2'-deoxyribonucleotide-(2'-deoxyribose 5'-phosphate)-2'-deoxyribonucleotide-DNA = a 3'-end 2'-deoxyribonucleotide-(2,3-dehydro-2,3-deoxyribose 5'-phosphate)-DNA + a 5'-end 5'-phospho-2'-deoxyribonucleoside-DNA + H(+). In terms of biological role, involved in base excision repair of DNA damaged by oxidation or by mutagenic agents. Acts as a DNA glycosylase that recognizes and removes damaged bases. Has a preference for oxidized purines, such as 7,8-dihydro-8-oxoguanine (8-oxoG). Has AP (apurinic/apyrimidinic) lyase activity and introduces nicks in the DNA strand. Cleaves the DNA backbone by beta-delta elimination to generate a single-strand break at the site of the removed base with both 3'- and 5'-phosphates. The sequence is that of Formamidopyrimidine-DNA glycosylase from Cereibacter sphaeroides (strain ATCC 17029 / ATH 2.4.9) (Rhodobacter sphaeroides).